Consider the following 152-residue polypeptide: Transcriptional regulator MraZ (152 aa).

2 SpoVT-AbrB domains span residues 5 to 52 and 81 to 124; these read ATLV…PLPE and ASEC…DETT.

The protein belongs to the MraZ family. In terms of assembly, forms oligomers.

The protein localises to the cytoplasm. Its subcellular location is the nucleoid. In terms of biological role, negatively regulates its own expression and that of the subsequent genes in the proximal part of the division and cell wall (dcw) gene cluster. Acts by binding directly to DNA. May also regulate the expression of genes outside the dcw cluster. The polypeptide is Transcriptional regulator MraZ (Shigella dysenteriae serotype 1 (strain Sd197)).